A 61-amino-acid polypeptide reads, in one-letter code: Large ribosomal subunit protein eL37 (61 aa).

Positions 19, 22, 34, and 37 each coordinate Zn(2+). The C4-type zinc-finger motif lies at 19 to 37 (CRRCGRNSFNVRKGYCAAC).

The protein belongs to the eukaryotic ribosomal protein eL37 family. It depends on Zn(2+) as a cofactor.

Functionally, binds to the 23S rRNA. In Sulfurisphaera tokodaii (strain DSM 16993 / JCM 10545 / NBRC 100140 / 7) (Sulfolobus tokodaii), this protein is Large ribosomal subunit protein eL37 (rpl37e).